The primary structure comprises 230 residues: Ribonuclease 3 (230 aa).

The RNase III domain occupies 1–134 (MKQLEELLST…FLGALLLDKG (134 aa)). Glu47 serves as a coordination point for Mg(2+). The active site involves Asp51. Residues Asp120 and Glu123 each contribute to the Mg(2+) site. Residue Glu123 is part of the active site. The DRBM domain occupies 160–229 (DYKTCLQEFL…AKNALAQLSE (70 aa)).

The protein belongs to the ribonuclease III family. As to quaternary structure, homodimer. The cofactor is Mg(2+).

It is found in the cytoplasm. The catalysed reaction is Endonucleolytic cleavage to 5'-phosphomonoester.. In terms of biological role, digests double-stranded RNA. Involved in the processing of primary rRNA transcript to yield the immediate precursors to the large and small rRNAs (23S and 16S). Processes some mRNAs, and tRNAs when they are encoded in the rRNA operon. Processes pre-crRNA and tracrRNA of type II CRISPR loci if present in the organism. The sequence is that of Ribonuclease 3 from Streptococcus pyogenes serotype M2 (strain MGAS10270).